A 282-amino-acid chain; its full sequence is Large ribosomal subunit protein uL2 (282 aa).

2 disordered regions span residues 31–55 (KRLT…RHIG) and 223–282 (LAMN…NTQR). Basic residues-rich tracts occupy residues 34-55 (TKPV…RHIG) and 270-282 (VTRR…NTQR).

Belongs to the universal ribosomal protein uL2 family. In terms of assembly, part of the 50S ribosomal subunit. Forms a bridge to the 30S subunit in the 70S ribosome.

Functionally, one of the primary rRNA binding proteins. Required for association of the 30S and 50S subunits to form the 70S ribosome, for tRNA binding and peptide bond formation. It has been suggested to have peptidyltransferase activity; this is somewhat controversial. Makes several contacts with the 16S rRNA in the 70S ribosome. In Anaeromyxobacter dehalogenans (strain 2CP-C), this protein is Large ribosomal subunit protein uL2.